Reading from the N-terminus, the 394-residue chain is MAQEAGDMDDGQVSDSDSDMTVAPSDRPLPVPKALGGDCGLRPFQSTATACAPASHYRTVKSVDSSEESFSDSDDDSSVWKRKRQKCFNTPPKPEPFQFDQSSQKPPIAGRKKVNNIWSAVLQEQNQDAVATELGILGMEGTIDRSRQSETYNYLLAKKLKRESQEHTKELDKELEEYMHGGKKTGPKEEENGQGHPKRKRPVKDRVGDRLEMNYKGRYEITEDDSQERVADEISFRLQEPKKDLIARVVRIIGNKKAIELLMETAEVEQNGGLFIMNGSRRRTPGGVFLNLLKNTPSISEEQIKDIFYLENQKEYENKKAARKRRIQVMGKKMKQAIKNLNFQEDDDTSRETFASDTNEALASLDESQEGHGETKLDAEEAIEVDHSHDLDMF.

Acidic residues-rich tracts occupy residues 1-18 and 65-77; these read MAQE…DSDS and SSEE…DDDS. Positions 1-109 are disordered; sequence MAQEAGDMDD…DQSSQKPPIA (109 aa). At Ala2 the chain carries N-acetylalanine. The tract at residues 2–329 is necessary for interaction with CBP80; the sequence is AQEAGDMDDG…KAARKRRIQV (328 aa). A phosphoserine mark is found at Ser14, Ser16, Ser65, Ser66, Ser69, and Ser73. A Nuclear localization signal motif is present at residues 81–84; the sequence is KRKR. The short motif at 130–139 is the Nuclear export signal element; that stretch reads VATELGILGM. A compositionally biased stretch (basic and acidic residues) spans 178-193; the sequence is YMHGGKKTGPKEEENG. The tract at residues 178–208 is disordered; that stretch reads YMHGGKKTGPKEEENGQGHPKRKRPVKDRVG. The short motif at 198–201 is the Nuclear localization signal element; it reads KRKR. Ser226 carries the post-translational modification Phosphoserine. Residues 228-328 are sufficient for poly U RNA-binding; the sequence is ERVADEISFR…KKAARKRRIQ (101 aa). A necessary for poly U RNA-binding and snRNA export region spans residues 279 to 287; it reads GSRRRTPGG. A Phosphothreonine modification is found at Thr296. 2 positions are modified to phosphoserine: Ser356 and Ser368. Residues 365–394 are disordered; the sequence is LDESQEGHGETKLDAEEAIEVDHSHDLDMF. A compositionally biased stretch (basic and acidic residues) spans 369–394; it reads QEGHGETKLDAEEAIEVDHSHDLDMF.

This sequence belongs to the PHAX family. In terms of assembly, found in a U snRNA export complex with PHAX/RNUXA, NCBP1/CBP80, NCBP2/CBP20, RAN, XPO1 and m7G-capped RNA. Part of a precomplex with PHAX/RNUXA, NCBP1/CBP80, NCBP2/CBP20 and m7G-capped RNA. Interacts with NCBP1/CBP80. Found in a complex with snoRNA, Interacts with NCBP2/CBP20. Interacts with DDX39A; this interaction stimulates PHAX RNA binding activity. In terms of processing, phosphorylated in the nucleus. Dephosphorylated in the cytoplasm.

It localises to the nucleus. Its subcellular location is the nucleoplasm. It is found in the cajal body. The protein resides in the cytoplasm. In terms of biological role, a phosphoprotein adapter involved in the XPO1-mediated U snRNA export from the nucleus. Bridge components required for U snRNA export, the cap binding complex (CBC)-bound snRNA on the one hand and the GTPase Ran in its active GTP-bound form together with the export receptor XPO1 on the other. Its phosphorylation in the nucleus is required for U snRNA export complex assembly and export, while its dephosphorylation in the cytoplasm causes export complex disassembly. It is recycled back to the nucleus via the importin alpha/beta heterodimeric import receptor. The directionality of nuclear export is thought to be conferred by an asymmetric distribution of the GTP- and GDP-bound forms of Ran between the cytoplasm and nucleus. Its compartmentalized phosphorylation cycle may also contribute to the directionality of export. Binds strongly to m7G-capped U1 and U5 small nuclear RNAs (snRNAs) in a sequence-unspecific manner and phosphorylation-independent manner. Also plays a role in the biogenesis of U3 small nucleolar RNA (snoRNA). Involved in the U3 snoRNA transport from nucleoplasm to Cajal bodies. Binds strongly to m7G-capped U3, U8 and U13 precursor snoRNAs and weakly to trimethylated (TMG)-capped U3, U8 and U13 snoRNAs. Also binds to telomerase RNA. In Bos taurus (Bovine), this protein is Phosphorylated adapter RNA export protein (PHAX).